The following is a 222-amino-acid chain: MLCRAACSAGRRLGPAASTAGSRHKHSLPDLPYDYGALEPHINAQIMQLHHSKHHATYVNNLNVTEEKYHEALAKGDVTTQVALQPALKFNGGGHINHSIFWTNLSPKGGGEPKGELLEAIKRDFGSFEKFKEKLTAVSVGVQGSGWGWLGFNKEQGRLQIAACSNQDPLQGTTGLIPLLGIDVWEHAYYLQYKNVRPDYLKAIWNVINWENVSQRYIVCKK.

The N-terminal 24 residues, methionine 1–histidine 24, are a transit peptide targeting the mitochondrion. Residue histidine 50 coordinates Mn(2+). Residue tyrosine 58 is modified to 3'-nitrotyrosine. N6-acetyllysine; alternate is present on residues lysine 68 and lysine 75. Residues lysine 68 and lysine 75 each carry the N6-succinyllysine; alternate modification. Histidine 98 is a binding site for Mn(2+). N6-acetyllysine is present on lysine 114. N6-acetyllysine; alternate is present on residues lysine 122 and lysine 130. 2 positions are modified to N6-succinyllysine; alternate: lysine 122 and lysine 130. 2 residues coordinate Mn(2+): aspartate 183 and histidine 187. At lysine 202 the chain carries N6-acetyllysine.

Belongs to the iron/manganese superoxide dismutase family. In terms of assembly, homotetramer. Mn(2+) serves as cofactor. Post-translationally, nitrated under oxidative stress. Nitration coupled with oxidation inhibits the catalytic activity. In terms of processing, acetylation at Lys-122 decreases enzymatic activity. Deacetylated by SIRT3 upon exposure to ionizing radiations or after long fasting. Polyubiquitinated; leading to proteasomal degradation. Deubiquitinated by USP36 which increases protein stability.

Its subcellular location is the mitochondrion matrix. The catalysed reaction is 2 superoxide + 2 H(+) = H2O2 + O2. Its function is as follows. Destroys superoxide anion radicals which are normally produced within the cells and which are toxic to biological systems. The protein is Superoxide dismutase [Mn], mitochondrial (Sod2) of Rattus norvegicus (Rat).